The following is a 362-amino-acid chain: D-alanine--D-alanine ligase (362 aa).

The 205-residue stretch at 153–357 (KKIAREAGIP…YADLLTTLVS (205 aa)) folds into the ATP-grasp domain. 180–235 (RELLGLPVFVKPARGGSSIGISKVDSWRDLPAAIEEAASHDPKVIIEAMITGPEVE) is a binding site for ATP. D312, E324, and N326 together coordinate Mg(2+).

This sequence belongs to the D-alanine--D-alanine ligase family. Requires Mg(2+) as cofactor. Mn(2+) serves as cofactor.

The protein localises to the cytoplasm. The enzyme catalyses 2 D-alanine + ATP = D-alanyl-D-alanine + ADP + phosphate + H(+). The protein operates within cell wall biogenesis; peptidoglycan biosynthesis. Its function is as follows. Cell wall formation. This chain is D-alanine--D-alanine ligase, found in Corynebacterium urealyticum (strain ATCC 43042 / DSM 7109).